The sequence spans 338 residues: tRNA N6-adenosine threonylcarbamoyltransferase (338 aa).

Fe cation-binding residues include histidine 110, histidine 114, and tyrosine 131. Substrate is bound by residues 131 to 135 (YVSGG), aspartate 163, aspartate 184, and asparagine 268. Aspartate 296 provides a ligand contact to Fe cation.

Belongs to the KAE1 / TsaD family. Fe(2+) serves as cofactor.

It is found in the cytoplasm. It carries out the reaction L-threonylcarbamoyladenylate + adenosine(37) in tRNA = N(6)-L-threonylcarbamoyladenosine(37) in tRNA + AMP + H(+). Required for the formation of a threonylcarbamoyl group on adenosine at position 37 (t(6)A37) in tRNAs that read codons beginning with adenine. Is probably involved in the transfer of the threonylcarbamoyl moiety of threonylcarbamoyl-AMP (TC-AMP) to the N6 group of A37. This is tRNA N6-adenosine threonylcarbamoyltransferase from Staphylothermus marinus (strain ATCC 43588 / DSM 3639 / JCM 9404 / F1).